Reading from the N-terminus, the 64-residue chain is Orcokinin peptides (64 aa).

2 propeptides span residues 1–6 and 23–24; these read MNIRPG and NI.

Belongs to the orcokinin family. Orcokinin-3 is expressed throughout the central nervous system (at protein level).

The protein localises to the secreted. Its function is as follows. Myotropic peptides. This chain is Orcokinin peptides, found in Camponotus floridanus (Florida carpenter ant).